A 98-amino-acid chain; its full sequence is uncharacterized protein (98 aa).

Residues 19-31 are compositionally biased toward basic residues; that stretch reads RRMSKRSKNKAKK. Residues 19 to 47 are disordered; sequence RRMSKRSKNKAKKERVPVEDRPPTPMPTS.

The protein belongs to the lymphocryptovirus BNLF2b family.

This is an uncharacterized protein from Homo sapiens (Human).